The chain runs to 432 residues: Zinc finger protein 829 (432 aa).

The KRAB domain maps to 35-106 (VMFRDVSIDF…DRELTRGLCS (72 aa)). The segment at 156 to 178 (WECKICGKTFNQNSQFIQHQRIH) adopts a C2H2-type 1 zinc-finger fold. A C2H2-type 2; degenerate zinc finger spans residues 184–206 (YESKEYGKSFSRGSLVTRHQRIH). 8 consecutive C2H2-type zinc fingers follow at residues 212–234 (YECK…QRIH), 240–262 (YECK…QRIH), 268–290 (YECK…LRIH), 296–318 (YECK…QRMH), 324–346 (YECK…HRIH), 352–374 (YECE…QRIH), 380–402 (YECN…QRIH), and 408–430 (YDCK…EGIH).

It belongs to the krueppel C2H2-type zinc-finger protein family.

The protein localises to the nucleus. May be involved in transcriptional regulation. In Homo sapiens (Human), this protein is Zinc finger protein 829 (ZNF829).